The sequence spans 463 residues: Succinate--CoA ligase [ADP-forming] subunit beta, mitochondrial (463 aa).

Residues 1–53 (MAASMFYGRQLAAAALRSHRPQTTLRAAAQVLGNSGLFNKHGLQVQQQQQRTL) constitute a mitochondrion transit peptide. Residues 61 to 288 (MELLQEAGVS…SNSAYRQKKI (228 aa)) form the ATP-grasp domain. Lys-78 carries the post-translational modification N6-acetyllysine. A Phosphotyrosine modification is found at Tyr-84. Lys-88 is modified (N6-acetyllysine; alternate). At Lys-88 the chain carries N6-succinyllysine; alternate. Residues Lys-98 and 105–107 (GRG) each bind ATP. Residues Lys-129, Lys-139, Lys-143, and Lys-216 each carry the N6-acetyllysine modification. Mg(2+) is bound by residues Asn-258 and Asp-272. The residue at position 279 (Ser-279) is a Phosphoserine. Asn-323 contributes to the substrate binding site. Thr-341 carries the phosphothreonine modification. Lys-368 is modified (N6-acetyllysine). 380 to 382 (GIM) contacts substrate. Residue Lys-438 is modified to N6-acetyllysine.

This sequence belongs to the succinate/malate CoA ligase beta subunit family. ATP-specific subunit beta subfamily. As to quaternary structure, heterodimer of an alpha and a beta subunit. The beta subunit determines specificity for ATP. Interacts with ALAS2. The cofactor is Mg(2+).

It localises to the mitochondrion. The catalysed reaction is succinate + ATP + CoA = succinyl-CoA + ADP + phosphate. It functions in the pathway carbohydrate metabolism; tricarboxylic acid cycle; succinate from succinyl-CoA (ligase route): step 1/1. Its function is as follows. ATP-specific succinyl-CoA synthetase functions in the citric acid cycle (TCA), coupling the hydrolysis of succinyl-CoA to the synthesis of ATP and thus represents the only step of substrate-level phosphorylation in the TCA. The beta subunit provides nucleotide specificity of the enzyme and binds the substrate succinate, while the binding sites for coenzyme A and phosphate are found in the alpha subunit. The protein is Succinate--CoA ligase [ADP-forming] subunit beta, mitochondrial of Mus musculus (Mouse).